We begin with the raw amino-acid sequence, 179 residues long: Large ribosomal subunit protein uL5 (179 aa).

The protein belongs to the universal ribosomal protein uL5 family. In terms of assembly, part of the 50S ribosomal subunit; part of the 5S rRNA/L5/L18/L25 subcomplex. Contacts the 5S rRNA and the P site tRNA. Forms a bridge to the 30S subunit in the 70S ribosome.

This is one of the proteins that bind and probably mediate the attachment of the 5S RNA into the large ribosomal subunit, where it forms part of the central protuberance. In the 70S ribosome it contacts protein S13 of the 30S subunit (bridge B1b), connecting the 2 subunits; this bridge is implicated in subunit movement. Contacts the P site tRNA; the 5S rRNA and some of its associated proteins might help stabilize positioning of ribosome-bound tRNAs. In Francisella philomiragia subsp. philomiragia (strain ATCC 25017 / CCUG 19701 / FSC 153 / O#319-036), this protein is Large ribosomal subunit protein uL5.